A 343-amino-acid polypeptide reads, in one-letter code: MSQDLDQIVADAQAAFAAANDNATLENEKARFLGKTGALTELLKGLGKLDPETRKSEGARINQVKQQVEAALQARRQALADALMNARLAAEAIDVTLPGRAVARGSLHPVMRTWERVEQIFGSIGFDVADGPEIETDWMNFTALNNPDNHPARSMQDTFYVDGRDSEDKLLLLRTHTSPMQVRYARMHVEKYAGKAMPPIKVICPGRTYRVDSDATHSPMFNQVEGLWIGEDVSFADLKGVYTDFLRKFFERDDIQVRFRPSYFPFTEPSAEIDMAFGNGKWLEISGSGQVHPNVLRNMGLDPERYIGFAFGSGLERLTMLRYGINDLRLFFEGDVRFLRQFA.

Glu268 is a Mg(2+) binding site.

Belongs to the class-II aminoacyl-tRNA synthetase family. Phe-tRNA synthetase alpha subunit type 1 subfamily. In terms of assembly, tetramer of two alpha and two beta subunits. Mg(2+) is required as a cofactor.

It is found in the cytoplasm. It catalyses the reaction tRNA(Phe) + L-phenylalanine + ATP = L-phenylalanyl-tRNA(Phe) + AMP + diphosphate + H(+). The chain is Phenylalanine--tRNA ligase alpha subunit from Cupriavidus taiwanensis (strain DSM 17343 / BCRC 17206 / CCUG 44338 / CIP 107171 / LMG 19424 / R1) (Ralstonia taiwanensis (strain LMG 19424)).